A 249-amino-acid polypeptide reads, in one-letter code: Type III pantothenate kinase (249 aa).

6–13 (DCGNSFIK) is a binding site for ATP. Substrate is bound by residues Tyr-93 and 100–103 (GLDR). Residue Asp-102 is the Proton acceptor of the active site. Residue Asp-122 coordinates K(+). Thr-125 contributes to the ATP binding site. A substrate-binding site is contributed by Thr-181.

It belongs to the type III pantothenate kinase family. Homodimer. Requires NH4(+) as cofactor. It depends on K(+) as a cofactor.

It is found in the cytoplasm. The enzyme catalyses (R)-pantothenate + ATP = (R)-4'-phosphopantothenate + ADP + H(+). It participates in cofactor biosynthesis; coenzyme A biosynthesis; CoA from (R)-pantothenate: step 1/5. Functionally, catalyzes the phosphorylation of pantothenate (Pan), the first step in CoA biosynthesis. This chain is Type III pantothenate kinase, found in Pseudomonas syringae pv. syringae (strain B728a).